Consider the following 369-residue polypeptide: CASP-like protein 4U1 (369 aa).

Positions M1 to S162 are disordered. The Cytoplasmic portion of the chain corresponds to M1–E222. Pro residues predominate over residues T7–P23. Positions S36–A51 are enriched in basic and acidic residues. 2 stretches are compositionally biased toward low complexity: residues A87–E96 and S114–P127. The helical transmembrane segment at L223–A243 threads the bilayer. At S244–R262 the chain is on the extracellular side. Residues Y263 to I283 form a helical membrane-spanning segment. Topologically, residues R284 to Y300 are cytoplasmic. A helical membrane pass occupies residues C301–A321. The Extracellular segment spans residues S322 to K339. The chain crosses the membrane as a helical span at residues I340–I360. The Cytoplasmic segment spans residues S361–V369.

Belongs to the Casparian strip membrane proteins (CASP) family. As to quaternary structure, homodimer and heterodimers.

The protein resides in the cell membrane. The polypeptide is CASP-like protein 4U1 (Zea mays (Maize)).